The chain runs to 349 residues: Homeobox-leucine zipper protein HOX5 (349 aa).

A DNA-binding region (homeobox) is located at residues 83–142 (APEKKRRLTAEQVQMLERSFEEENKLEPERKTELARRLGMAPRQVAVWFQNRRARWKTKQ). Residues 141–185 (KQLEHDFDRLKAAYDALAADHHALLSDNDRLRAQVISLTEKLQDK) are leucine-zipper. A disordered region spans residues 181 to 253 (KLQDKETSPS…GTNDDGDGGA (73 aa)). Over residues 188–198 (SPSSATITTAA) the composition is skewed to low complexity.

Belongs to the HD-ZIP homeobox family. Class I subfamily. Homodimer. May form a heterodimer with HOX4. In terms of tissue distribution, expressed in seedlings, roots, leaves, nodes, internodes, flowers and embryo.

It localises to the nucleus. Its function is as follows. Probable transcription activator that binds to the DNA sequence 5'-CAAT[AT]ATTG-3'. The chain is Homeobox-leucine zipper protein HOX5 (HOX5) from Oryza sativa subsp. japonica (Rice).